Reading from the N-terminus, the 518-residue chain is Myosin-binding protein 7 (518 aa).

Residues 69 to 167 (NELELLRETV…ALTFEAQAYK (99 aa)) enclose the GTD-binding domain. Residues 276 to 350 (VVGQSPRHQR…DSSEIGDNDM (75 aa)) are disordered. A compositionally biased stretch (low complexity) spans 291 to 301 (STGSASSLLGT). Polar residues predominate over residues 310-320 (SNDSPRSNNGS). At Ser-385 the chain carries Phosphoserine. Positions 399 to 431 (EISKLYMRLQALEADRESMRQAIMSMRTEKAQM) form a coiled coil. A helical transmembrane segment spans residues 458 to 477 (IIGAFNFISVFKWITSFVFW).

In terms of assembly, interacts with myosin XI-I.

The protein resides in the endomembrane system. Its function is as follows. Membrane-anchored myosin receptors that define a distinct, plant-specific transport vesicle compartment. The polypeptide is Myosin-binding protein 7 (Arabidopsis thaliana (Mouse-ear cress)).